The following is a 287-amino-acid chain: Protease HtpX (287 aa).

The next 2 helical transmembrane spans lie at 4 to 24 (VMLF…VLNI) and 36 to 56 (LSGL…ISLM). H143 lines the Zn(2+) pocket. E144 is a catalytic residue. A Zn(2+)-binding site is contributed by H147. 2 helical membrane-spanning segments follow: residues 158–178 (LMQG…ANIV) and 192–212 (MVYF…ASFI). E221 is a Zn(2+) binding site.

The protein belongs to the peptidase M48B family. Zn(2+) serves as cofactor.

The protein localises to the cell inner membrane. This Vibrio atlanticus (strain LGP32) (Vibrio splendidus (strain Mel32)) protein is Protease HtpX.